Here is a 252-residue protein sequence, read N- to C-terminus: 7-cyano-7-deazaguanine synthase (252 aa).

22–32 (FSGGQDSTTCL) lines the ATP pocket. 4 residues coordinate Zn(2+): C215, C230, C233, and C236.

This sequence belongs to the QueC family. Zn(2+) serves as cofactor.

It catalyses the reaction 7-carboxy-7-deazaguanine + NH4(+) + ATP = 7-cyano-7-deazaguanine + ADP + phosphate + H2O + H(+). It participates in purine metabolism; 7-cyano-7-deazaguanine biosynthesis. In terms of biological role, catalyzes the ATP-dependent conversion of 7-carboxy-7-deazaguanine (CDG) to 7-cyano-7-deazaguanine (preQ(0)). This chain is 7-cyano-7-deazaguanine synthase, found in Granulibacter bethesdensis (strain ATCC BAA-1260 / CGDNIH1).